The following is a 231-amino-acid chain: CLAVATA3/ESR (CLE)-related protein 4B-2 (231 aa).

The N-terminal stretch at 1–21 (MATNTMLCLLILSVVLALAFA) is a signal peptide. Residues 21–83 (ATNKKGDEEP…SNQLPNNNWM (63 aa)) are required for secretion from the host cytoplasm to the host apoplasm. N-linked (GlcNAc...) asparagine glycosylation occurs at Asn-32. A disordered region spans residues 116–231 (RKTGMHSQRH…APAGPDPIHH (116 aa)). Basic and acidic residues-rich tracts occupy residues 125-137 (HHEETTLEQEKRV) and 144-221 (PIHH…EKRG). The A-1 repeat unit spans residues 127–135 (EETTLEQEK). The interval 127 to 219 (EETTLEQEKR…HEETTFEQEK (93 aa)) is 5 X approximate repeat A. A CLE-1 repeat occupies 136 to 147 (RVAGAGPDPIHH). Residues 136–231 (RVAGAGPDPI…APAGPDPIHH (96 aa)) form a 5 X approximate repeat CLE region. The stretch at 148–156 (EETTLEQEK) is one A-2 repeat. The CLE-2 repeat unit spans residues 157 to 168 (RAVPAGPDPKHH). One copy of the A-3 repeat lies at 169 to 177 (EETTLEQEK). One copy of the CLE-3 repeat lies at 178-189 (RAVPAGPDPKHH). Residues 190–198 (EETTLEQEK) form an A-4 repeat. Residues 199–210 (RAVPAGPDPKHH) form a CLE-4 repeat. The A-5 repeat unit spans residues 211 to 219 (EETTFEQEK). The stretch at 220-231 (RGAPAGPDPIHH) is one CLE-5 repeat.

It belongs to the CLV3/ESR signal peptide family. In terms of tissue distribution, highly expressed exclusively within the dorsal esophageal gland cell during syncytium formation in host plants.

It is found in the secreted. The protein localises to the host cytoplasm. The protein resides in the host extracellular space. It localises to the extracellular space. Its subcellular location is the apoplast. In terms of biological role, mimics host plant CLE extracellular signal peptides that regulate cell fate. May play a role in the differentiation or division of feeding cells (syncytia) induced in plant roots during infection. In Globodera rostochiensis (Golden nematode worm), this protein is CLAVATA3/ESR (CLE)-related protein 4B-2 (CLE-4B-2).